The sequence spans 256 residues: MAAVALTYMIPPATPLAIIDFDMLPEDDESEEVGFEYEDLLDWQLKEAVDRRDLESFTILIEENWCHDLTLENGDNLLGYMIKQGHALTEEWYDLIGVTTTCHANPEGELPIDLLRKHLGSCRCNLESMNCDLVEYIIRTCYAHPINRDYVYHRMDTSRYTHKRLNRNHNLTLSIEKKPIIVEAPPMEEEEISEVEDALNVLQRLCAQEEGDNKEAETNNNNYVFPWMTPAYELPEQLTFYDMPMTPFNCNNVMYC.

Positions 187-223 (MEEEEISEVEDALNVLQRLCAQEEGDNKEAETNNNNY) form a coiled coil.

This is an uncharacterized protein from Ostreid herpesvirus 1 (isolate France) (OsHV-1).